The chain runs to 93 residues: Exodeoxyribonuclease 7 small subunit (93 aa).

Over residues 1-17 the composition is skewed to low complexity; it reads MAKSSASSLSSAKPVAA. The segment at 1 to 22 is disordered; the sequence is MAKSSASSLSSAKPVAAGPDAS.

It belongs to the XseB family. As to quaternary structure, heterooligomer composed of large and small subunits.

The protein localises to the cytoplasm. It carries out the reaction Exonucleolytic cleavage in either 5'- to 3'- or 3'- to 5'-direction to yield nucleoside 5'-phosphates.. In terms of biological role, bidirectionally degrades single-stranded DNA into large acid-insoluble oligonucleotides, which are then degraded further into small acid-soluble oligonucleotides. In Polaromonas naphthalenivorans (strain CJ2), this protein is Exodeoxyribonuclease 7 small subunit.